The chain runs to 62 residues: Short neurotoxin 1 (62 aa).

Over residues 1–16 the composition is skewed to polar residues; it reads LECHNQQSIQTPTTTG. Residues 1–20 form a disordered region; it reads LECHNQQSIQTPTTTGCSGG. Disulfide bonds link cysteine 3-cysteine 24, cysteine 17-cysteine 41, cysteine 43-cysteine 54, and cysteine 55-cysteine 60.

It belongs to the three-finger toxin family. Short-chain subfamily. Type I alpha-neurotoxin sub-subfamily. As to expression, expressed by the venom gland.

It is found in the secreted. In terms of biological role, binds to muscle nicotinic acetylcholine receptor (nAChR) and inhibit acetylcholine from binding to the receptor, thereby impairing neuromuscular transmission. This is Short neurotoxin 1 from Naja kaouthia (Monocled cobra).